An 89-amino-acid polypeptide reads, in one-letter code: MSIAAERKAEVIKTNATKAGDTGSPEVQVAILSERINNLTSHFKTHVKDNHSRRGLLKLVSTRRSLLDYLKKRDEARYKALLEKHNIRR.

Residues Met-1 to Val-11 are compositionally biased toward basic and acidic residues. Residues Met-1–Ser-24 form a disordered region.

The protein belongs to the universal ribosomal protein uS15 family. In terms of assembly, part of the 30S ribosomal subunit. Forms a bridge to the 50S subunit in the 70S ribosome, contacting the 23S rRNA.

In terms of biological role, one of the primary rRNA binding proteins, it binds directly to 16S rRNA where it helps nucleate assembly of the platform of the 30S subunit by binding and bridging several RNA helices of the 16S rRNA. Its function is as follows. Forms an intersubunit bridge (bridge B4) with the 23S rRNA of the 50S subunit in the ribosome. This chain is Small ribosomal subunit protein uS15, found in Bradyrhizobium diazoefficiens (strain JCM 10833 / BCRC 13528 / IAM 13628 / NBRC 14792 / USDA 110).